The sequence spans 258 residues: MVLIRVIANLLILQLSNAQKSSELVIGGDECNITEHRFLVEIFNSSGLFCGGTLIDQEWVLSAAHCDMRNMRIYLGVHNEGVQHADQQRRFAREKFFCLSSRNYTKWDKDIMLIRLNRPVNNSEHIAPLSLPSNPPSVGSVCRIMGWGTITSPNATFPDVPHCANINLFNYTVCRGAHAGLPATSRTLCAGVLQGGIDTCGGDSGGPLICNGTFQGIVSWGGHPCAQPGEPALYTKVFDYLPWIQSIIAGNTTATCPP.

The first 18 residues, 1 to 18, serve as a signal peptide directing secretion; that stretch reads MVLIRVIANLLILQLSNA. Positions 19 to 24 are excised as a propeptide; the sequence is QKSSEL. Residues 25 to 249 form the Peptidase S1 domain; the sequence is VIGGDECNIT…YLPWIQSIIA (225 aa). Cystine bridges form between Cys-31/Cys-163, Cys-50/Cys-66, Cys-98/Cys-256, Cys-142/Cys-210, Cys-174/Cys-189, and Cys-200/Cys-225. N-linked (GlcNAc...) asparagine glycosylation is found at Asn-32 and Asn-44. The active-site Charge relay system is His-65. Residue Asn-103 is glycosylated (N-linked (GlcNAc...) asparagine). Catalysis depends on Asp-110, which acts as the Charge relay system. Residue Asn-121 is glycosylated (N-linked (GlcNAc...) asparagine). O-linked (GalNAc...) serine glycosylation is present at Ser-133. Asn-154 and Asn-170 each carry an N-linked (GlcNAc...) asparagine glycan. The active-site Charge relay system is the Ser-204. Residues Asn-211 and Asn-251 are each glycosylated (N-linked (GlcNAc...) asparagine). Thr-255 carries an O-linked (GalNAc...) threonine glycan.

This sequence belongs to the peptidase S1 family. Snake venom subfamily. In terms of assembly, monomer. N- and O-glycosylated. The glycosylation has a stabilizing effect on the protein. However, the removal of part of the carbohydrates enhances the proteolytic activity of the SVSP towards human and rat fibrinogen. Expressed by the venom gland.

Its subcellular location is the secreted. Inhibited by diisopropylfluorophosphate (DFP), but not by SBTI, Antithrombin III/heparin and BPTI, probably due to steric hindrance caused by its huge carbohydrate moietie. Its function is as follows. Snake venom serine protease that has a potent and selective fibrinogenolytic activity. Preferentially cleaves the alpha-chain (FGA) of human and rat fibrinogen at Arg-|-Gly bonds, and slowly digests the beta-chain (FGB). In vivo, completely avoids thrombus formation induced in rat, decreases the fibrinogen plasma level and prolonges the recalcification time. Possesses esterolytic and amidolytic activities. The chain is Snake venom serine protease BPA from Bothrops jararaca (Jararaca).